A 324-amino-acid polypeptide reads, in one-letter code: D-alanine--D-alanine ligase (324 aa).

The ATP-grasp domain maps to 121–321 (NQYLKAFGVR…IKDVMTDIIE (201 aa)). Position 149–204 (149–204 (MEKIGLPCFIKPSLGGSSFGVTKVKTKEQIQPAIVKAFEEAQEVLVEAFMEGTELT)) interacts with ATP. Mg(2+) is bound by residues Asp-275, Glu-288, and Asn-290.

Belongs to the D-alanine--D-alanine ligase family. Mg(2+) serves as cofactor. The cofactor is Mn(2+).

Its subcellular location is the cytoplasm. The enzyme catalyses 2 D-alanine + ATP = D-alanyl-D-alanine + ADP + phosphate + H(+). Its pathway is cell wall biogenesis; peptidoglycan biosynthesis. Cell wall formation. This is D-alanine--D-alanine ligase from Bacteroides thetaiotaomicron (strain ATCC 29148 / DSM 2079 / JCM 5827 / CCUG 10774 / NCTC 10582 / VPI-5482 / E50).